A 394-amino-acid polypeptide reads, in one-letter code: MTKPIRNVAVLGATGSIGAAALDVLARHPRQFHVSLLAAGQRVDALLALCRTYRPDHAVIGDATLYTTLRDGLNAAGLATKAYAGEAALAELVASTTCDTVVAAIVGAAGLHSTLAAARAGKRLLLANKESLVLAGMLLMREASISGAEIIPIDSEHNAIFQCLRSRTTDGVHRVTLTASGGPFRGHNRTMLAKITPTQAMAHPTWSMGPKISVDSATLMNKGLEVIEAHHLFGLPSEQIDVLVHPQSLVHSLVEFIDGSTLAQLSLPDMRTTLAVGLAWPERIGSGVQGLDLMKHNRLDFEHPDTETFSCLRLARDAMQTGGTAPAVLNAANEIAVSAFLQGRIGFLTIPALIEHALTTLPRYEADTLETLLTVDTETRRITHAALTHFPLPL.

NADPH-binding residues include T14, G15, S16, I17, G40, and N128. K129 is a 1-deoxy-D-xylulose 5-phosphate binding site. E130 contributes to the NADPH binding site. Residue D154 coordinates Mn(2+). The 1-deoxy-D-xylulose 5-phosphate site is built by S155, E156, S180, and H203. E156 is a Mn(2+) binding site. G209 contributes to the NADPH binding site. The 1-deoxy-D-xylulose 5-phosphate site is built by S216, N221, K222, and E225. E225 provides a ligand contact to Mn(2+).

The protein belongs to the DXR family. Requires Mg(2+) as cofactor. Mn(2+) serves as cofactor.

The enzyme catalyses 2-C-methyl-D-erythritol 4-phosphate + NADP(+) = 1-deoxy-D-xylulose 5-phosphate + NADPH + H(+). It participates in isoprenoid biosynthesis; isopentenyl diphosphate biosynthesis via DXP pathway; isopentenyl diphosphate from 1-deoxy-D-xylulose 5-phosphate: step 1/6. Functionally, catalyzes the NADPH-dependent rearrangement and reduction of 1-deoxy-D-xylulose-5-phosphate (DXP) to 2-C-methyl-D-erythritol 4-phosphate (MEP). This chain is 1-deoxy-D-xylulose 5-phosphate reductoisomerase, found in Xylella fastidiosa (strain M23).